A 193-amino-acid chain; its full sequence is HMG-Y-related protein A (193 aa).

Residues 11 to 81 form the H15 domain; the sequence is PIPPYPEMIL…LKNNYFRAGA (71 aa). Residues 75 to 193 are disordered; that stretch reads NYFRAGAPDA…PAVPSETAAA (119 aa). A Nuclear localization signal 1 (NLS) motif is present at residues 86–92; it reads PKRGRGR. 4 consecutive DNA-binding regions (a.T hook) follow at residues 87 to 98, 113 to 124, 138 to 149, and 173 to 184; these read KRGRGRPPKARD, GRGRGRPPKAKS, PKPRGRPPKKAK, and KRGRGRPPKVRP. Residues 145 to 149 carry the Nuclear localization signal 2 (NLS) motif; sequence PKKAK.

Belongs to the histone H1/H5 family. Post-translationally, phosphorylated by CDK, this phosphorylation prevents DNA-binding. Motility is increased when hypophosphorylated. Acetylated.

It is found in the nucleus. It localises to the nucleolus. Its function is as follows. Binds A/T-rich DNA (e.g. present in the storage gamma-zein gene promoter) with a highly dynamic distribution into the nucleus. Probably involved in endosperm development, during cells shift from a mitotic cycle to endoreduplication leading to massive synthesis of storage proteins (zeins) and starch. The chain is HMG-Y-related protein A from Zea mays (Maize).